Consider the following 84-residue polypeptide: Small ribosomal subunit protein bS18 (84 aa).

It belongs to the bacterial ribosomal protein bS18 family. Part of the 30S ribosomal subunit. Forms a tight heterodimer with protein bS6.

Functionally, binds as a heterodimer with protein bS6 to the central domain of the 16S rRNA, where it helps stabilize the platform of the 30S subunit. The polypeptide is Small ribosomal subunit protein bS18 (Mycoplasma mobile (strain ATCC 43663 / 163K / NCTC 11711) (Mesomycoplasma mobile)).